A 1391-amino-acid polypeptide reads, in one-letter code: DNA-directed RNA polymerase subunit beta' (1391 aa).

Residues Cys-72, Cys-74, Cys-87, and Cys-90 each coordinate Zn(2+). 3 residues coordinate Mg(2+): Asp-462, Asp-464, and Asp-466. Zn(2+) is bound by residues Cys-816, Cys-890, Cys-897, and Cys-900.

Belongs to the RNA polymerase beta' chain family. The RNAP catalytic core consists of 2 alpha, 1 beta, 1 beta' and 1 omega subunit. When a sigma factor is associated with the core the holoenzyme is formed, which can initiate transcription. Requires Mg(2+) as cofactor. Zn(2+) is required as a cofactor.

The catalysed reaction is RNA(n) + a ribonucleoside 5'-triphosphate = RNA(n+1) + diphosphate. In terms of biological role, DNA-dependent RNA polymerase catalyzes the transcription of DNA into RNA using the four ribonucleoside triphosphates as substrates. In Neisseria meningitidis serogroup A / serotype 4A (strain DSM 15465 / Z2491), this protein is DNA-directed RNA polymerase subunit beta'.